The following is a 314-amino-acid chain: tRNA pseudouridine synthase B (314 aa).

Histidine 43 contacts substrate. Aspartate 48 functions as the Nucleophile in the catalytic mechanism. Positions 76, 179, and 200 each coordinate substrate.

This sequence belongs to the pseudouridine synthase TruB family. Type 1 subfamily.

The enzyme catalyses uridine(55) in tRNA = pseudouridine(55) in tRNA. Responsible for synthesis of pseudouridine from uracil-55 in the psi GC loop of transfer RNAs. This chain is tRNA pseudouridine synthase B, found in Salmonella typhi.